Consider the following 372-residue polypeptide: N-methyl-L-tryptophan oxidase (372 aa).

4 to 34 (DLIIIGSGSVGAAAGYYATRAGLNVLMTDAH) lines the FAD pocket. Residue Cys308 is modified to S-8alpha-FAD cysteine.

Belongs to the MSOX/MTOX family. MTOX subfamily. In terms of assembly, monomer. Requires FAD as cofactor.

It catalyses the reaction N(alpha)-methyl-L-tryptophan + O2 + H2O = L-tryptophan + formaldehyde + H2O2. Its function is as follows. Catalyzes the oxidative demethylation of N-methyl-L-tryptophan. This Shigella boydii serotype 18 (strain CDC 3083-94 / BS512) protein is N-methyl-L-tryptophan oxidase.